Here is a 371-residue protein sequence, read N- to C-terminus: Peptidyl-prolyl cis-trans isomerase CPR6 (371 aa).

The 168-residue stretch at 7–174 folds into the PPIase cyclophilin-type domain; sequence FFDISIGGKP…RDVKIDDCGV (168 aa). TPR repeat units follow at residues 219-252, 270-303, and 308-341; these read IETV…LKEY, VSIP…EAAD, and AKAL…QPND.

It belongs to the cyclophilin-type PPIase family. PPIase D subfamily. As to quaternary structure, interacts with RPD3.

The protein localises to the cytoplasm. The enzyme catalyses [protein]-peptidylproline (omega=180) = [protein]-peptidylproline (omega=0). PPIases accelerate the folding of proteins. It catalyzes the cis-trans isomerization of proline imidic peptide bonds in oligopeptides. This Saccharomyces cerevisiae (strain ATCC 204508 / S288c) (Baker's yeast) protein is Peptidyl-prolyl cis-trans isomerase CPR6 (CPR6).